A 523-amino-acid chain; its full sequence is Cyclic di-GMP binding protein BcsE (523 aa).

The protein belongs to the BcsE family.

Required for cellulose biosynthesis. May have protease activity, but BcsA is not targeted. Binds bis-(3'-5') cyclic diguanylic acid (c-di-GMP). This Salmonella typhimurium (strain LT2 / SGSC1412 / ATCC 700720) protein is Cyclic di-GMP binding protein BcsE.